Consider the following 108-residue polypeptide: UPF0060 membrane protein DSY4629 (108 aa).

4 consecutive transmembrane segments (helical) span residues isoleucine 5–tryptophan 25, proline 31–leucine 51, valine 60–aspartate 80, and asparagine 86–proline 106.

Belongs to the UPF0060 family.

It is found in the cell membrane. The chain is UPF0060 membrane protein DSY4629 from Desulfitobacterium hafniense (strain Y51).